The chain runs to 594 residues: Choline dehydrogenase, mitochondrial (594 aa).

The transit peptide at 1–29 (MWCLLRGLGRPGALARGALGQQQSLGARA) directs the protein to the mitochondrion. 42-71 (SYVVVGAGSAGCVLAGRLTEDPAERVLLLE) serves as a coordination point for FAD. An N6-succinyllysine modification is found at lysine 436. N6-acetyllysine; alternate is present on residues lysine 484 and lysine 496. 2 positions are modified to N6-succinyllysine; alternate: lysine 484 and lysine 496. Histidine 511 acts as the Proton acceptor in catalysis. Lysine 580 carries the N6-acetyllysine modification.

This sequence belongs to the GMC oxidoreductase family. FAD is required as a cofactor.

The protein resides in the mitochondrion inner membrane. It carries out the reaction choline + A = betaine aldehyde + AH2. It participates in amine and polyamine biosynthesis; betaine biosynthesis via choline pathway; betaine aldehyde from choline (cytochrome c reductase route): step 1/1. This Homo sapiens (Human) protein is Choline dehydrogenase, mitochondrial (CHDH).